Consider the following 541-residue polypeptide: Putative asparagine synthetase [glutamine-hydrolyzing] 1 (541 aa).

Cysteine 2 functions as the For GATase activity in the catalytic mechanism. Positions 2–213 constitute a Glutamine amidotransferase type-2 domain; that stretch reads CSISGIIVKD…PNSQLIYYLD (212 aa). L-glutamine-binding positions include 68–72, 92–94, and aspartate 116; these read RLAIV and NGE. Residues valine 289 and 363–364 contribute to the ATP site; that span reads SG.

The protein belongs to the asparagine synthetase family.

The enzyme catalyses L-aspartate + L-glutamine + ATP + H2O = L-asparagine + L-glutamate + AMP + diphosphate + H(+). It participates in amino-acid biosynthesis; L-asparagine biosynthesis; L-asparagine from L-aspartate (L-Gln route): step 1/1. The protein is Putative asparagine synthetase [glutamine-hydrolyzing] 1 of Methanocaldococcus jannaschii (strain ATCC 43067 / DSM 2661 / JAL-1 / JCM 10045 / NBRC 100440) (Methanococcus jannaschii).